We begin with the raw amino-acid sequence, 77 residues long: Translation initiation factor IF-1, chloroplastic (77 aa).

Residues 1–71 (MKEQKLIHEG…TRGRIIYRLR (71 aa)) form the S1-like domain.

Belongs to the IF-1 family. In terms of assembly, component of the 30S ribosomal translation pre-initiation complex which assembles on the 30S ribosome in the order IF-2 and IF-3, IF-1 and N-formylmethionyl-tRNA(fMet); mRNA recruitment can occur at any time during PIC assembly.

Its subcellular location is the plastid. The protein localises to the chloroplast. Functionally, one of the essential components for the initiation of protein synthesis. Stabilizes the binding of IF-2 and IF-3 on the 30S subunit to which N-formylmethionyl-tRNA(fMet) subsequently binds. Helps modulate mRNA selection, yielding the 30S pre-initiation complex (PIC). Upon addition of the 50S ribosomal subunit IF-1, IF-2 and IF-3 are released leaving the mature 70S translation initiation complex. The polypeptide is Translation initiation factor IF-1, chloroplastic (Calycanthus floridus var. glaucus (Eastern sweetshrub)).